We begin with the raw amino-acid sequence, 196 residues long: Imidazoleglycerol-phosphate dehydratase (196 aa).

Belongs to the imidazoleglycerol-phosphate dehydratase family.

The protein resides in the cytoplasm. The catalysed reaction is D-erythro-1-(imidazol-4-yl)glycerol 3-phosphate = 3-(imidazol-4-yl)-2-oxopropyl phosphate + H2O. It functions in the pathway amino-acid biosynthesis; L-histidine biosynthesis; L-histidine from 5-phospho-alpha-D-ribose 1-diphosphate: step 6/9. In Desulforamulus reducens (strain ATCC BAA-1160 / DSM 100696 / MI-1) (Desulfotomaculum reducens), this protein is Imidazoleglycerol-phosphate dehydratase.